A 495-amino-acid polypeptide reads, in one-letter code: Beta-galactoside alpha-2,6-sialyltransferase 2 (495 aa).

The Cytoplasmic portion of the chain corresponds to 1–10 (MKPHLKQWRQ). The helical; Signal-anchor for type II membrane protein transmembrane segment at 11 to 31 (GMLCGVFAWGLFFVVIFLYFT) threads the bilayer. Topologically, residues 32–495 (DSSPAKPAPS…LQAVRCPPGA (464 aa)) are lumenal. Disordered regions lie at residues 63-90 (GASE…LRTW) and 107-165 (GRTS…EDGE). Low complexity predominate over residues 134 to 143 (PEGARPPRAA). Residues 144–153 (PGRRAKRGPR) are compositionally biased toward basic residues. 3 disulfides stabilise this stretch: Cys225-Cys491, Cys268-Cys420, and Cys438-Cys449. Residues Asn279 and Asn309 are each glycosylated (N-linked (GlcNAc...) asparagine).

The protein belongs to the glycosyltransferase 29 family.

It is found in the golgi apparatus. The protein resides in the golgi stack membrane. It carries out the reaction a beta-D-galactoside + CMP-N-acetyl-beta-neuraminate = an N-acetyl-alpha-neuraminyl-(2-&gt;6)-beta-D-galactosyl derivative + CMP + H(+). Functionally, transfers sialic acid from the donor of substrate CMP-sialic acid to galactose containing acceptor substrates. Has alpha-2,6-sialyltransferase activity toward oligosaccharides that have the Gal-beta-1,4-GlcNAc sequence at the non-reducing end of their carbohydrate groups, but it has weak or no activities toward glycoproteins and glycolipids. The sequence is that of Beta-galactoside alpha-2,6-sialyltransferase 2 (ST6GAL2) from Bos taurus (Bovine).